Reading from the N-terminus, the 493-residue chain is FAD-linked oxidoreductase tazL (493 aa).

The signal sequence occupies residues 1–17 (MRSNTVILAALPLVASA). N-linked (GlcNAc...) asparagine glycosylation is found at Asn-29, Asn-41, Asn-53, Asn-91, Asn-253, Asn-318, and Asn-387. The region spanning 63–235 (WAEPTFAVTI…TSATYEIFDA (173 aa)) is the FAD-binding PCMH-type domain.

The protein belongs to the oxygen-dependent FAD-linked oxidoreductase family.

Its pathway is secondary metabolite biosynthesis. FAD-linked oxidoreductase; part of the gene cluster that mediates the biosynthesis of azaterrilone A and other azaphilones, a class of fungal metabolites characterized by a highly oxygenated pyrano-quinone bicyclic core and exhibiting a broad range of bioactivities. The first step of the pathway begins with the non-reducing polyketide synthase tazA that assembles one acetyl-CoA starter unit, five malonyl-CoA units, and catalyzes a series of Claisen condensations, methylation, PT-mediated cyclization, and finally releases the first hexaketide precursor through the R-domain. The tazA product then undergoes reduction on its terminal ketone and the following pyran-ring formation by yet undetermined enzyme(s). Dehydration and enoyl reduction, possibly involving the trans-enoyl reductase tazE leads to the next intermediate. TazD is predicted as an acetyltransferase and might catalyze the acetylation steps leading to the synthesis of azaterrilone A. Azaterrilone A is not the final product of the taz pathway and both the highly reducing polyketide synthase tazB and the dual enzyme tazHJ catalyze late steps of the pathway, leading to the production of the 2 final stereoisomers that contain additional polyketide modification whose structures have still to be determined. This Aspergillus terreus (strain NIH 2624 / FGSC A1156) protein is FAD-linked oxidoreductase tazL.